The following is a 155-amino-acid chain: Small ribosomal subunit protein uS7c (155 aa).

Belongs to the universal ribosomal protein uS7 family. As to quaternary structure, part of the 30S ribosomal subunit.

The protein resides in the plastid. The protein localises to the chloroplast. In terms of biological role, one of the primary rRNA binding proteins, it binds directly to 16S rRNA where it nucleates assembly of the head domain of the 30S subunit. This Yucca glauca (Soapweed yucca) protein is Small ribosomal subunit protein uS7c (rps7).